We begin with the raw amino-acid sequence, 273 residues long: R-spondin-3 (273 aa).

An N-terminal signal peptide occupies residues 1–21; sequence MHLRLISWFFIILNFMEYIGS. FU repeat units lie at residues 35-86 and 92-135; these read PNVS…GYYG and INKC…GLEA. Residue Asn36 is glycosylated (N-linked (GlcNAc...) asparagine). 11 cysteine pairs are disulfide-bonded: Cys41–Cys48, Cys45–Cys54, Cys57–Cys76, Cys80–Cys95, Cys98–Cys105, Cys102–Cys111, Cys114–Cys125, Cys129–Cys142, Cys148–Cys190, Cys159–Cys166, and Cys199–Cys206. Residues 147–207 form the TSP type-1 domain; it reads HCEASEWSPW…KCTVQRKKCP (61 aa). A disordered region spans residues 201 to 273; it reads VQRKKCPKGE…QKSVSVSTVH (73 aa). The span at 213–223 shows a compositional bias: basic residues; that stretch reads RKGRERKRKKP. Residues 224 to 252 are compositionally biased toward basic and acidic residues; sequence NKEESKDAIPDNKGLEPSRETPEQRENKQ.

The protein belongs to the R-spondin family. Interacts with the extracellular domain of FZD8 and LRP6. It however does not form a ternary complex with FZD8 and LRP6. Interacts with WNT1. Binds heparin. Interacts with LGR4, LGR5 and LGR6.

Its subcellular location is the secreted. Activator of the canonical Wnt signaling pathway by acting as a ligand for LGR4-6 receptors, which acts as a key regulator of angiogenesis. Upon binding to LGR4-6 (LGR4, LGR5 or LGR6), LGR4-6 associate with phosphorylated LRP6 and frizzled receptors that are activated by extracellular Wnt receptors, triggering the canonical Wnt signaling pathway to increase expression of target genes. Also regulates the canonical Wnt/beta-catenin-dependent pathway and non-canonical Wnt signaling by acting as an inhibitor of ZNRF3, an important regulator of the Wnt signaling pathway. Acts as a ligand for frizzled FZD8 and LRP6. May negatively regulate the TGF-beta pathway. Acts as a key regulator of angiogenesis by controlling vascular stability and pruning: acts by activating the non-canonical Wnt signaling pathway in endothelial cells. Can also amplify Wnt signaling pathway independently of LGR4-6 receptors, possibly by acting as a direct antagonistic ligand to RNF43 and ZNRF3. In Bos taurus (Bovine), this protein is R-spondin-3 (RSPO3).